The chain runs to 530 residues: MSAKEKFASLSPAEFFKRNPELAGFPNPARALYQTVRELIENSLDATDVHGILPNIKITIDLIDESRQIYKVNVVDNGIGIPPQEVPNAFGRVLYSSKYVNRQTRGMYGLGVKAAVLYSQMHQDKPIEIETSPVNSKRLYTFKLKIDINKNEPIIVERGSVENNTGFHGTSVAISIPGDWPKAKSRIYEYIKRTYIITPYAEFIFKDPEGNVTYYPRLTNKIPKPPQEVKPHPYGVDREEIKIMINNLKRDYTIKEFLMSEFQSIGDTTADKILELVGLRPNKKVKNLTEEEITRLVETFKKYEDFRSPSADSLSVIGEDLIELGLKKIFNPDFTASITRKPKAYQGHPFIVEAGIAFGGSIPVGEEPIVLRYANKIPLIYDEKSDVIWKVVEELDWKRYGIESDQYQMVVMVHLCSTKIPYKSAGKESIAEVEDIEKEIKNALMEVARKLKLYLSEKRKEQEAKKKLLAYLKYVPEVSRSLAIFLASGNKELVPKYQGEIVEGLFKLISKKLDLINIEEYRKVYKVDSE.

ATP contacts are provided by residues asparagine 42, aspartate 76, 97 to 98, 106 to 113, and lysine 427; these read SK and GMYGLGVK.

The protein belongs to the TOP6B family. Homodimer. Heterotetramer of two Top6A and two Top6B chains.

The catalysed reaction is ATP-dependent breakage, passage and rejoining of double-stranded DNA.. Functionally, relaxes both positive and negative superturns and exhibits a strong decatenase activity. This is Type 2 DNA topoisomerase 6 subunit B from Saccharolobus solfataricus (strain ATCC 35092 / DSM 1617 / JCM 11322 / P2) (Sulfolobus solfataricus).